A 136-amino-acid polypeptide reads, in one-letter code: Protein PsiE homolog (136 aa).

Transmembrane regions (helical) follow at residues 15–35 (AMQAVLNLALLCLGIILVVFL), 58–78 (VEGLVVYFLYFEFIALIVKYF), 82–102 (FHFPLRYFVYIGITAIVRLII), and 108–128 (PLAVLIYSAAILILVITLWLC).

This sequence belongs to the PsiE family.

It localises to the cell inner membrane. The chain is Protein PsiE homolog from Klebsiella pneumoniae subsp. pneumoniae (strain ATCC 700721 / MGH 78578).